The chain runs to 575 residues: Probable methionine--tRNA ligase, mitochondrial (575 aa).

Positions 52 to 62 match the 'HIGH' region motif; that stretch reads FYVNGPPHIGH. The short motif at 352–356 is the 'KMSKS' region element; that stretch reads KMSKS. Lys-355 serves as a coordination point for ATP.

Belongs to the class-I aminoacyl-tRNA synthetase family.

It localises to the mitochondrion matrix. It catalyses the reaction tRNA(Met) + L-methionine + ATP = L-methionyl-tRNA(Met) + AMP + diphosphate. The polypeptide is Probable methionine--tRNA ligase, mitochondrial (mmetS) (Dictyostelium discoideum (Social amoeba)).